A 123-amino-acid polypeptide reads, in one-letter code: Large ribosomal subunit protein bL19 (123 aa).

Belongs to the bacterial ribosomal protein bL19 family.

Functionally, this protein is located at the 30S-50S ribosomal subunit interface and may play a role in the structure and function of the aminoacyl-tRNA binding site. The chain is Large ribosomal subunit protein bL19 from Bdellovibrio bacteriovorus (strain ATCC 15356 / DSM 50701 / NCIMB 9529 / HD100).